A 352-amino-acid polypeptide reads, in one-letter code: Alanine racemase (352 aa).

The Proton acceptor; specific for D-alanine role is filled by K33. K33 carries the N6-(pyridoxal phosphate)lysine modification. R129 is a substrate binding site. Y250 acts as the Proton acceptor; specific for L-alanine in catalysis. Residue M298 participates in substrate binding.

This sequence belongs to the alanine racemase family. It depends on pyridoxal 5'-phosphate as a cofactor.

The enzyme catalyses L-alanine = D-alanine. The protein operates within amino-acid biosynthesis; D-alanine biosynthesis; D-alanine from L-alanine: step 1/1. Catalyzes the interconversion of L-alanine and D-alanine. May also act on other amino acids. This is Alanine racemase (alr) from Neisseria meningitidis serogroup A / serotype 4A (strain DSM 15465 / Z2491).